The following is a 138-amino-acid chain: Putative pre-16S rRNA nuclease (138 aa).

The protein belongs to the YqgF nuclease family.

Its subcellular location is the cytoplasm. Functionally, could be a nuclease involved in processing of the 5'-end of pre-16S rRNA. This is Putative pre-16S rRNA nuclease from Glaesserella parasuis serovar 5 (strain SH0165) (Haemophilus parasuis).